We begin with the raw amino-acid sequence, 50 residues long: GEWEIIDIGPFTQNLGKFAVDEENKIGQYGRLTFNKVIRPCMKKTIYEEN.

As to quaternary structure, heterodimer of an A chain and a B chain.

Functionally, taste-modifying protein; intensely sweet-tasting protein. This chain is Monellin chain B, found in Dioscoreophyllum cumminsii (Serendipity berry).